Here is a 544-residue protein sequence, read N- to C-terminus: Probable protein kinase UbiB (544 aa).

The region spanning 123-504 (DFDENALASA…QRWQKKMFVL (382 aa)) is the Protein kinase domain. Residues 129–137 (LASASIAQV) and Lys-155 each bind ATP. Asp-290 serves as the catalytic Proton acceptor. 2 consecutive transmembrane segments (helical) span residues 501–521 (MFVL…FAAL) and 523–543 (LAIS…GFLL).

This sequence belongs to the ABC1 family. UbiB subfamily.

Its subcellular location is the cell inner membrane. It functions in the pathway cofactor biosynthesis; ubiquinone biosynthesis [regulation]. Functionally, is probably a protein kinase regulator of UbiI activity which is involved in aerobic coenzyme Q (ubiquinone) biosynthesis. This is Probable protein kinase UbiB from Histophilus somni (strain 129Pt) (Haemophilus somnus).